Here is an 871-residue protein sequence, read N- to C-terminus: Translation initiation factor IF-2 (871 aa).

Disordered regions lie at residues 60-101 (KKNI…QEVK) and 184-203 (ESLK…KKES). Positions 61 to 72 (KNIKTPTAKKPK) are enriched in basic residues. The segment covering 73 to 101 (KENIKEQEKLNESEKKEPKKEEKLKQEVK) has biased composition (basic and acidic residues). A tr-type G domain is found at 370–537 (TRAPVITIMG…IVLLQADILE (168 aa)). A G1 region spans residues 379 to 386 (GHVDHGKT). 379–386 (GHVDHGKT) is a GTP binding site. The interval 404–408 (GITQH) is G2. Residues 425-428 (DTPG) are G3. GTP contacts are provided by residues 425–429 (DTPGH) and 479–482 (NKMD). The segment at 479-482 (NKMD) is G4. Residues 515-517 (SAK) are G5.

Belongs to the TRAFAC class translation factor GTPase superfamily. Classic translation factor GTPase family. IF-2 subfamily.

The protein resides in the cytoplasm. Its function is as follows. One of the essential components for the initiation of protein synthesis. Protects formylmethionyl-tRNA from spontaneous hydrolysis and promotes its binding to the 30S ribosomal subunits. Also involved in the hydrolysis of GTP during the formation of the 70S ribosomal complex. The sequence is that of Translation initiation factor IF-2 from Campylobacter jejuni (strain RM1221).